The chain runs to 101 residues: Large ribosomal subunit protein uL24 (101 aa).

The protein belongs to the universal ribosomal protein uL24 family. In terms of assembly, part of the 50S ribosomal subunit.

One of two assembly initiator proteins, it binds directly to the 5'-end of the 23S rRNA, where it nucleates assembly of the 50S subunit. Functionally, one of the proteins that surrounds the polypeptide exit tunnel on the outside of the subunit. This Borreliella afzelii (strain PKo) (Borrelia afzelii) protein is Large ribosomal subunit protein uL24.